The chain runs to 721 residues: Protein mu-NS (721 aa).

Residues 1–13 (MASFKGFSANTVP) are interaction with sigma-NS. The RNA-binding stretch occupies residues 1–38 (MASFKGFSANTVPVSKAKRDISSLAATPGLRSQSFTPS). The tract at residues 14 to 40 (VSKAKRDISSLAATPGLRSQSFTPSVD) is interaction with mu-2. Positions 471-721 (SNDVTDGIKL…IDFSVPTDEL (251 aa)) are involved in the formation of factory-like inclusions. 2 coiled-coil regions span residues 522–559 (PLLS…KSAQ) and 628–684 (LMNG…ALNQ).

The protein belongs to the orthoreovirus mu-NS protein family. As to quaternary structure, interacts with mu-2. Interacts with sigma-NS; in viral factories. Interacts with the inner capsid proteins lambda-1 and sigma-2, and outer capsid protein lambda-2; in viral factories. The N-terminus is blocked.

It is found in the host cytoplasm. Non-structural protein implicated with protein sigma-NS in forming the matrix of viral factories, which are large inclusions in the host cytoplasm where replication intermediates are assembled and viral RNA replication takes place. Together with mu-2, recruits the other core proteins to these factories. Binds RNA and recruits viral mRNAs to sites of viral replication. The polypeptide is Protein mu-NS (M3) (Reovirus type 3 (strain Dearing) (T3D)).